The following is a 407-amino-acid chain: Glucan 1,3-beta-glucosidase 1 (407 aa).

A signal peptide spans M1–S22. The active-site Proton donor is E213. C295 and C406 are disulfide-bonded. E312 (nucleophile) is an active-site residue.

The protein belongs to the glycosyl hydrolase 5 (cellulase A) family.

Its subcellular location is the secreted. The catalysed reaction is Successive hydrolysis of beta-D-glucose units from the non-reducing ends of (1-&gt;3)-beta-D-glucans, releasing alpha-glucose.. Functionally, beta-glucanases participate in the metabolism of beta-glucan, the main structural component of the cell wall. It could also function biosynthetically as a transglycosylase. This is Glucan 1,3-beta-glucosidase 1 (exg1) from Schizosaccharomyces pombe (strain 972 / ATCC 24843) (Fission yeast).